The following is a 289-amino-acid chain: ATP synthase gamma chain (289 aa).

It belongs to the ATPase gamma chain family. As to quaternary structure, F-type ATPases have 2 components, CF(1) - the catalytic core - and CF(0) - the membrane proton channel. CF(1) has five subunits: alpha(3), beta(3), gamma(1), delta(1), epsilon(1). CF(0) has three main subunits: a, b and c.

The protein localises to the cell inner membrane. Functionally, produces ATP from ADP in the presence of a proton gradient across the membrane. The gamma chain is believed to be important in regulating ATPase activity and the flow of protons through the CF(0) complex. The polypeptide is ATP synthase gamma chain (Leptospira biflexa serovar Patoc (strain Patoc 1 / ATCC 23582 / Paris)).